The chain runs to 2498 residues: PKS-NRPS hybrid synthetase acdB (2498 aa).

Residues 34-427 are adenylation (A) domain; it reads FEQAAHAHFD…GRADSQVKIR (394 aa). A Carrier 1 domain is found at 531 to 606; sequence QPATELERDI…SLAGYLMDMD (76 aa). Ser566 carries the post-translational modification O-(pantetheine 4'-phosphoryl)serine. One can recognise a Ketosynthase family 3 (KS3) domain in the interval 627 to 1058; sequence SDDIAVVSMA…GTNAHVIVEE (432 aa). Residues Cys802, His938, and His979 each act as for beta-ketoacyl synthase activity in the active site. The malonyl-CoA:ACP transacylase (MAT) domain stretch occupies residues 1165–1485; sequence LFAGQGSQQL…EILARLHVQH (321 aa). The segment at 1739–1917 is ketoreductase (KR) domain; sequence GAVLITGGLS…PAVCVAYGPL (179 aa). In terms of domain architecture, Carrier 2 spans 2017 to 2092; it reads EILLRTIQEA…ELSRYLLPQL (76 aa). Residue Ser2052 is modified to O-(pantetheine 4'-phosphoryl)serine. The thioester reductase (TE) domain stretch occupies residues 2149–2378; sequence VTGATEFVGA…FPVDYVCRTI (230 aa).

It in the C-terminal section; belongs to the NRP synthetase family. It depends on pantetheine 4'-phosphate as a cofactor.

The protein operates within secondary metabolite biosynthesis. PKS-NRPS hybrid synthetase; part of the gene cluster that mediates the biosynthesis of aspcandine, a pyrrolobenzazepine alkaloid. Initially, the indoleamine 2,3-dioxygenase acdA accepts L-tryptophan and performs the oxidative opening of the indole ring to yield N'-formyl-L-kynurenine, which undergoes the spontaneous deformylation reaction to provide L-kynurenine. The kynurenine 3-monooxygenase acdD then hydroxylates L-kynurenine to afford 3-hydroxy-L-kynurenine. 3-hydroxy-L-kynurenine is activated by the A domain of the NRPS-PKS acdB and subsequently loaded onto the enzyme. The KS domain conducts the decarboxylative condensation of the 3-hydroxy-L-kynurenyl and malonyl moieties, and subsequent nucleophilic attacks by the two amino groups would occur nonenzymatically at two distinct positions, achieving the chain release and the construction of the tricyclic system. Finally, a dehydration reaction completes the biosynthesis to yield aspcandine. This chain is PKS-NRPS hybrid synthetase acdB, found in Aspergillus candidus.